Reading from the N-terminus, the 395-residue chain is Flap endonuclease 1 (395 aa).

An N-domain region spans residues 1-108; it reads MGILGLSKLL…DELEMRRQKA (108 aa). Asp34 is a Mg(2+) binding site. Arg74 lines the DNA pocket. Asp90 is a binding site for Mg(2+). The interval 116–136 is disordered; it reads EKAKDAGDDEMMEKMSKRTVR. The I-domain stretch occupies residues 126–257; it reads MMEKMSKRTV…QKAWEGIQRY (132 aa). The Mg(2+) site is built by Glu162, Glu164, Asp183, and Asp185. Residue Glu162 participates in DNA binding. DNA contacts are provided by Gly235 and Asp237. Asp237 provides a ligand contact to Mg(2+). Positions 340–348 are interaction with PCNA; sequence TQGRLDSFF.

This sequence belongs to the XPG/RAD2 endonuclease family. FEN1 subfamily. In terms of assembly, interacts with PCNA. Three molecules of FEN1 bind to one PCNA trimer with each molecule binding to one PCNA monomer. PCNA stimulates the nuclease activity without altering cleavage specificity. Mg(2+) serves as cofactor. Phosphorylated. Phosphorylation upon DNA damage induces relocalization to the nuclear plasma.

Its subcellular location is the nucleus. The protein localises to the nucleolus. The protein resides in the nucleoplasm. It localises to the mitochondrion. In terms of biological role, structure-specific nuclease with 5'-flap endonuclease and 5'-3' exonuclease activities involved in DNA replication and repair. During DNA replication, cleaves the 5'-overhanging flap structure that is generated by displacement synthesis when DNA polymerase encounters the 5'-end of a downstream Okazaki fragment. It enters the flap from the 5'-end and then tracks to cleave the flap base, leaving a nick for ligation. Also involved in the long patch base excision repair (LP-BER) pathway, by cleaving within the apurinic/apyrimidinic (AP) site-terminated flap. Acts as a genome stabilization factor that prevents flaps from equilibrating into structures that lead to duplications and deletions. Also possesses 5'-3' exonuclease activity on nicked or gapped double-stranded DNA, and exhibits RNase H activity. Also involved in replication and repair of rDNA and in repairing mitochondrial DNA. This is Flap endonuclease 1 from Leishmania major.